Reading from the N-terminus, the 282-residue chain is Bifunctional protein FolD 2 (282 aa).

NADP(+) contacts are provided by residues 165–167 and Ser190; that span reads GRS.

The protein belongs to the tetrahydrofolate dehydrogenase/cyclohydrolase family. As to quaternary structure, homodimer.

The catalysed reaction is (6R)-5,10-methylene-5,6,7,8-tetrahydrofolate + NADP(+) = (6R)-5,10-methenyltetrahydrofolate + NADPH. It catalyses the reaction (6R)-5,10-methenyltetrahydrofolate + H2O = (6R)-10-formyltetrahydrofolate + H(+). Its pathway is one-carbon metabolism; tetrahydrofolate interconversion. Functionally, catalyzes the oxidation of 5,10-methylenetetrahydrofolate to 5,10-methenyltetrahydrofolate and then the hydrolysis of 5,10-methenyltetrahydrofolate to 10-formyltetrahydrofolate. This is Bifunctional protein FolD 2 from Acinetobacter baylyi (strain ATCC 33305 / BD413 / ADP1).